Consider the following 893-residue polypeptide: DNA mismatch repair protein MutS (893 aa).

A compositionally biased stretch (low complexity) spans 1–17 (MESTMSSASTNASPPSA). The segment at 1–22 (MESTMSSASTNASPPSASEKHT) is disordered. Residue 641–648 (GPNMGGKS) coordinates ATP.

The protein belongs to the DNA mismatch repair MutS family.

This protein is involved in the repair of mismatches in DNA. It is possible that it carries out the mismatch recognition step. This protein has a weak ATPase activity. This is DNA mismatch repair protein MutS from Herminiimonas arsenicoxydans.